Consider the following 218-residue polypeptide: Small ribosomal subunit protein uS5 (218 aa).

Residues 55-118 (LDHEVIDVSI…RNAKLNIIPV (64 aa)) form the S5 DRBM domain.

This sequence belongs to the universal ribosomal protein uS5 family. As to quaternary structure, part of the 30S ribosomal subunit. Contacts protein S4.

With S4 and S12 plays an important role in translational accuracy. The sequence is that of Small ribosomal subunit protein uS5 from Aeropyrum pernix (strain ATCC 700893 / DSM 11879 / JCM 9820 / NBRC 100138 / K1).